The sequence spans 373 residues: GPN-loop GTPase 1 (373 aa).

The residue at position 2 (alanine 2) is an N-acetylalanine. 29–34 contributes to the GTP binding site; sequence GSGKTT. The Gly-Pro-Asn (GPN)-loop; involved in dimer interface motif lies at 86–88; the sequence is GPN. A GTP-binding site is contributed by 189–192; that stretch reads NKTD. Residues serine 301, serine 312, and serine 314 each carry the phosphoserine modification. The tract at residues 304–373 is disordered; it reads LDTGTATGSS…SMAQYWKKNK (70 aa). The residue at position 328 (threonine 328) is a Phosphothreonine. Acidic residues predominate over residues 330–342; it reads DEEDEEADSDTDD. Serine 338 carries the post-translational modification Phosphoserine. Residue threonine 340 is modified to Phosphothreonine. Residues 343 to 355 are compositionally biased toward basic and acidic residues; it reads IDHRVTEESREEP.

The protein belongs to the GPN-loop GTPase family. Heterodimer with GPN3. Binds to RNA polymerase II (RNAPII). Interacts directly with RNAPII subunits RPB4 and RPB7 and the CTD of RPB1. Interacts with XPA.

The protein resides in the cytoplasm. Its subcellular location is the nucleus. In terms of biological role, small GTPase required for proper nuclear import of RNA polymerase II (RNAPII). May act at an RNAP assembly step prior to nuclear import. Forms an interface between the RNA polymerase II enzyme and chaperone/scaffolding proteins, suggesting that it is required to connect RNA polymerase II to regulators of protein complex formation. May be involved in nuclear localization of XPA. This is GPN-loop GTPase 1 from Bos taurus (Bovine).